A 180-amino-acid polypeptide reads, in one-letter code: Ribulose bisphosphate carboxylase small subunit, chloroplastic 2 (180 aa).

The transit peptide at 1-56 (MASMISSSAVTTVSRASRGQSAAVAPFGGLKSMTGFPVKKVNTDITSITSNGGRVK) directs the protein to the chloroplast.

The protein belongs to the RuBisCO small chain family. As to quaternary structure, heterohexadecamer of 8 large and 8 small subunits.

The protein localises to the plastid. It is found in the chloroplast. Its function is as follows. RuBisCO catalyzes two reactions: the carboxylation of D-ribulose 1,5-bisphosphate, the primary event in carbon dioxide fixation, as well as the oxidative fragmentation of the pentose substrate. Both reactions occur simultaneously and in competition at the same active site. Although the small subunit is not catalytic it is essential for maximal activity. In Pisum sativum (Garden pea), this protein is Ribulose bisphosphate carboxylase small subunit, chloroplastic 2.